A 101-amino-acid polypeptide reads, in one-letter code: uncharacterized protein (101 aa).

2 helical membrane-spanning segments follow: residues 35 to 55 and 66 to 86; these read LWTM…LIII and FLFF…TLLF.

The protein resides in the membrane. This is an uncharacterized protein from Saccharomyces cerevisiae (strain ATCC 204508 / S288c) (Baker's yeast).